The sequence spans 187 residues: UPF0669 protein C6orf120 homolog (187 aa).

The N-terminal stretch at 1–23 is a signal peptide; sequence MVEYWKRNFFMVLVLQAFYLANC. An N-linked (GlcNAc...) asparagine glycan is attached at Asn-47.

This sequence belongs to the UPF0669 family.

It is found in the secreted. The sequence is that of UPF0669 protein C6orf120 homolog from Xenopus tropicalis (Western clawed frog).